The following is a 430-amino-acid chain: Enolase (430 aa).

(2R)-2-phosphoglycerate is bound at residue Gln164. The active-site Proton donor is the Glu206. Mg(2+) is bound by residues Asp243, Glu286, and Asp313. (2R)-2-phosphoglycerate is bound by residues Lys338, Arg367, Ser368, and Lys389. Lys338 (proton acceptor) is an active-site residue.

The protein belongs to the enolase family. As to quaternary structure, component of the RNA degradosome, a multiprotein complex involved in RNA processing and mRNA degradation. Mg(2+) is required as a cofactor.

Its subcellular location is the cytoplasm. It localises to the secreted. The protein localises to the cell surface. The enzyme catalyses (2R)-2-phosphoglycerate = phosphoenolpyruvate + H2O. It participates in carbohydrate degradation; glycolysis; pyruvate from D-glyceraldehyde 3-phosphate: step 4/5. Catalyzes the reversible conversion of 2-phosphoglycerate (2-PG) into phosphoenolpyruvate (PEP). It is essential for the degradation of carbohydrates via glycolysis. The protein is Enolase of Dichelobacter nodosus (strain VCS1703A).